Reading from the N-terminus, the 197-residue chain is Lipoprotein signal peptidase (197 aa).

2 helical membrane-spanning segments follow: residues 73–93 (SNAI…YLMI) and 97–117 (TIGS…NLID). Active-site residues include D126 and D144. The chain crosses the membrane as a helical span at residues 135–155 (YSFPVFNLADCFITIGVIILI).

It belongs to the peptidase A8 family.

Its subcellular location is the cell inner membrane. It catalyses the reaction Release of signal peptides from bacterial membrane prolipoproteins. Hydrolyzes -Xaa-Yaa-Zaa-|-(S,diacylglyceryl)Cys-, in which Xaa is hydrophobic (preferably Leu), and Yaa (Ala or Ser) and Zaa (Gly or Ala) have small, neutral side chains.. It participates in protein modification; lipoprotein biosynthesis (signal peptide cleavage). This protein specifically catalyzes the removal of signal peptides from prolipoproteins. The sequence is that of Lipoprotein signal peptidase from Rickettsia felis (strain ATCC VR-1525 / URRWXCal2) (Rickettsia azadi).